A 352-amino-acid chain; its full sequence is C-C chemokine receptor type 5 (352 aa).

The Extracellular segment spans residues 1–30; that stretch reads MDYQVSSPTYDIDYYTSEPCQKVNVKQIAA. At Tyr-3 the chain carries Sulfotyrosine. 2 O-linked (GalNAc...) serine glycosylation sites follow: Ser-6 and Ser-7. A sulfotyrosine mark is found at Tyr-10, Tyr-14, and Tyr-15. 2 disulfide bridges follow: Cys-20-Cys-269 and Cys-101-Cys-178. The chain crosses the membrane as a helical span at residues 31 to 58; it reads RLLPPLYSLVFIFGFVGNILVVLILINC. Residues 59–68 are Cytoplasmic-facing; sequence KRLKSMTDIY. A helical transmembrane segment spans residues 69–89; it reads LLNLAISDLFFLLTVPFWAHY. The Extracellular segment spans residues 90-102; it reads AAAQWDFGNTMCQ. The chain crosses the membrane as a helical span at residues 103–124; the sequence is LLTGLYFIGFFSGIFFIILLTI. Over 125–141 the chain is Cytoplasmic; the sequence is DRYLAIVHAVFALKART. A helical membrane pass occupies residues 142 to 166; sequence VTFGVVTSVITWVVAVFASLPGIIF. The Extracellular portion of the chain corresponds to 167 to 198; it reads TRSQREGLHYTCSSHFPYSQYQFWKNFQTLKI. A helical membrane pass occupies residues 199 to 218; that stretch reads VILGLVLPLLVMVICYSGIL. At 219-235 the chain is on the cytoplasmic side; the sequence is KTLLRCRNEKKRHRAVR. A helical transmembrane segment spans residues 236–260; that stretch reads LIFTIMIVYFLFWAPYNIVLLLNTF. Residues 261 to 277 are Extracellular-facing; it reads QEFFGLNNCSSSNRLDQ. The helical transmembrane segment at 278 to 301 threads the bilayer; that stretch reads AMQVTETLGMTHCCINPIIYAFVG. At 302–352 the chain is on the cytoplasmic side; the sequence is EKFRNYLLVFFQKHIAKRFCKCCRIFQQEAPERASSVYTRSTGEQEISVGL. S-palmitoyl cysteine attachment occurs at residues Cys-321, Cys-323, and Cys-324. Residues Ser-336, Ser-337, Ser-342, and Ser-349 each carry the phosphoserine; by BARK1 modification.

This sequence belongs to the G-protein coupled receptor 1 family. Interacts with PRAF2. Efficient ligand binding to CCL3/MIP-1alpha and CCL4/MIP-1beta requires sulfation, O-glycosylation and sialic acid modifications. Glycosylation on Ser-6 is required for efficient binding of CCL4. Interacts with GRK2. Interacts with ARRB1 and ARRB2. Interacts with CNIH4. Interacts with S100A4; this interaction stimulates T-lymphocyte chemotaxis. Post-translationally, sulfated on at least 2 of the N-terminal tyrosines. Sulfation is required for efficient binding of the chemokines, CCL3 and CCL4. In terms of processing, palmitoylation in the C-terminal is important for cell surface expression. Phosphorylation on serine residues in the C-terminal is stimulated by binding CC chemokines especially by APO-RANTES. Post-translationally, O-glycosylated, but not N-glycosylated. Ser-6 appears to be the major site even if Ser-7 may be also O-glycosylated. Also sialylated glycans present which contribute to chemokine binding. Thr-16 and Ser-17 may also be glycosylated and, if so, with small moieties such as a T-antigen.

It localises to the cell membrane. Functionally, receptor for a number of inflammatory CC-chemokines including CCL3/MIP-1-alpha, CCL4/MIP-1-beta and RANTES and subsequently transduces a signal by increasing the intracellular calcium ion level. May play a role in the control of granulocytic lineage proliferation or differentiation. Participates in T-lymphocyte migration to the infection site by acting as a chemotactic receptor. The sequence is that of C-C chemokine receptor type 5 (CCR5) from Colobus polykomos (Western black-and-white colobus monkey).